The primary structure comprises 890 residues: MGVVVAETSQNGDISLLSEKKFTVPQPPSIEEFSIVKPISRGAFGKVYLARRKNNNKLFAVKVVKKADMINKNMVQQVQAERDALALSKSPFIVHLYYSLQSANNIYLIMEYLIGGDVKSLLHIYGYFDEEMAVKYISEVALALDYLHRHGIIHRDLKPDNMLISNEGHIKLTDFGLSKVTLKRELSMMDILTTPSMAKPKRDYSRTPGQVLSLISSLGFNTPVGGRTQGSIAQQTEGMRGNASTPLLMKKKENSVKGNKLMISCPEAGLSSPSMPVKCLTPNLLKCRTPFTTSSTSSQSRICLSSLESECGMSPRWENCSQDAEAPPYLNSSRVKDCSSEQARSKKPMGSSASQNLKHLEFAFSPIVDRRTGKKAGFQDETGELSDTPLATLGAKGVIRKCLYDNNAQEKHKDLGKDDQGELEKLTISPDSPPWLANGSVAPIQFNDDEIIEKMGIKRNYDLVEKSPEQEVLQDKKTNTDYKRGCTITGYPVSQSTGLTMEINSLFLSELRSSTNNYASDRKSEDDYISAPRTHENLGSGNTIAKNLLCELDDNCERDGEANSNSGCEEGENQKESLNQDSESSSADMSVTENQIERELCQVDKSIKELSFEESPSESNEETTPENKGMAFMAENDALKREPNRSVLPETLHNVLASPAPTSAMAHPRRKPMVAFRSYNSPINGSNLSEPSRISMNSADKIHFSLGCTGSFPMAVTPAQKKVQGLTETPYRTPKTVRRGGLQAENERILGTPDYLAPELLLGKSHGPAVDWWALGVCLFEFLTGIPPFNDETPSQVFQNILNRDIPWPEEEETLSVNAQSAIEILLAIDQTKRAGLKDLKAHHLFHAIEWDDLQNLPMPFIPQPDDETDTTYFEARNNAQHLKVSGFSL.

The Protein kinase domain occupies 33-846 (FSIVKPISRG…LKDLKAHHLF (814 aa)). Residues 39–47 (ISRGAFGKV) and lysine 62 each bind ATP. The active-site Proton acceptor is the aspartate 156. 5 disordered regions span residues 324–353 (AEAP…GSSA), 412–434 (HKDL…DSPP), 517–541 (NYAS…LGSG), 559–592 (DGEA…MSVT), and 609–628 (ELSF…PENK). The span at 412–425 (HKDLGKDDQGELEK) shows a compositional bias: basic and acidic residues. A compositionally biased stretch (polar residues) spans 576–592 (ESLNQDSESSSADMSVT). Acidic residues predominate over residues 615 to 624 (SPSESNEETT). Threonine 752 is subject to Phosphothreonine; by CDK1. The AGC-kinase C-terminal domain maps to 847 to 890 (HAIEWDDLQNLPMPFIPQPDDETDTTYFEARNNAQHLKVSGFSL).

It belongs to the protein kinase superfamily. AGC Ser/Thr protein kinase family. Phosphorylation at Thr-752 by CDK1 during M phase activates its kinase activity. Maximum phosphorylation occurs in prometaphase.

The protein resides in the cytoplasm. The protein localises to the cytoskeleton. Its subcellular location is the microtubule organizing center. It is found in the centrosome. It localises to the nucleus. It carries out the reaction L-seryl-[protein] + ATP = O-phospho-L-seryl-[protein] + ADP + H(+). The enzyme catalyses L-threonyl-[protein] + ATP = O-phospho-L-threonyl-[protein] + ADP + H(+). Serine/threonine kinase that plays a key role in M phase by acting as a regulator of mitosis entry and maintenance. Acts by promoting the inactivation of protein phosphatase 2A (PP2A) during M phase: does not directly inhibit PP2A but acts by mediating phosphorylation and subsequent activation of arpp19 and ensa at 'Ser-67', 2 phosphatase inhibitors that specifically inhibit the ppp2r2d (PR55-delta) subunit of PP2A. Inactivation of PP2A during M phase is essential to keep cyclin-B1-CDK1 activity high. Following DNA damage, it is also involved in checkpoint recovery by being inhibited. This Xenopus tropicalis (Western clawed frog) protein is Serine/threonine-protein kinase greatwall (mastl).